A 397-amino-acid chain; its full sequence is F-box protein At5g25290 (397 aa).

Residues 11 to 56 (VTLWSEIPMDILRSVFERLSFVDLHRAKIVCSHWYSCSKQSFLRKT) form the F-box domain.

This Arabidopsis thaliana (Mouse-ear cress) protein is F-box protein At5g25290.